Consider the following 362-residue polypeptide: 4-hydroxythreonine-4-phosphate dehydrogenase (362 aa).

T149 lines the substrate pocket. A divalent metal cation is bound by residues H184, H229, and H295. 3 residues coordinate substrate: K303, N312, and R321.

It belongs to the PdxA family. In terms of assembly, homodimer. Requires a divalent metal cation as cofactor.

It localises to the cytoplasm. The enzyme catalyses 4-(phosphooxy)-L-threonine + NAD(+) = 3-amino-2-oxopropyl phosphate + CO2 + NADH. The protein operates within cofactor biosynthesis; pyridoxine 5'-phosphate biosynthesis; pyridoxine 5'-phosphate from D-erythrose 4-phosphate: step 4/5. Catalyzes the NAD(P)-dependent oxidation of 4-(phosphooxy)-L-threonine (HTP) into 2-amino-3-oxo-4-(phosphooxy)butyric acid which spontaneously decarboxylates to form 3-amino-2-oxopropyl phosphate (AHAP). This is 4-hydroxythreonine-4-phosphate dehydrogenase from Nostoc sp. (strain PCC 7120 / SAG 25.82 / UTEX 2576).